We begin with the raw amino-acid sequence, 319 residues long: Thioredoxin reductase (319 aa).

Residues 11–14, 40–41, glutamine 45, asparagine 54, valine 87, cysteine 145, aspartate 288, and 295–297 each bind FAD; these read SGPA, IA, and RQA. Cysteine 142 and cysteine 145 are disulfide-bonded.

It belongs to the class-II pyridine nucleotide-disulfide oxidoreductase family. As to quaternary structure, homodimer. It depends on FAD as a cofactor.

The protein localises to the cytoplasm. It carries out the reaction [thioredoxin]-dithiol + NADP(+) = [thioredoxin]-disulfide + NADPH + H(+). This Yarrowia lipolytica (strain CLIB 122 / E 150) (Yeast) protein is Thioredoxin reductase (TRR1).